A 576-amino-acid chain; its full sequence is Immunoglobulin mu heavy chain (576 aa).

Gln1 is modified (pyrrolidone carboxylic acid). Ig-like domains are found at residues 1 to 97 (QVTL…TYYC), 132 to 212 (PTLF…EHVC), 236 to 334 (PKVS…QNAS), 352 to 442 (PSFA…QTIS), and 452 to 553 (PDVY…RTVD). The variable (V) domain, involved in antigen recognition stretch occupies residues 1-124 (QVTLTESGPA…VWGKGTTVTV (124 aa)). 3 disulfides stabilise this stretch: Cys22–Cys97, Cys153–Cys212, and Cys259–Cys320. Residues Asn74 and Asn170 are each glycosylated (N-linked (GlcNAc...) asparagine). The segment at 125–576 (SSGSASAPTL…VMSDTAGTCY (452 aa)) is constant (C) domain. N-linked (GlcNAc...) asparagine glycosylation is found at Asn332, Asn395, and Asn402. 2 disulfides stabilise this stretch: Cys367-Cys426 and Cys474-Cys536. N-linked (GlcNAc...) asparagine glycosylation is present at Asn563.

Immunoglobulins are composed of two identical heavy chains and two identical light chains; disulfide-linked. It is found almost exclusively as a homopentamer in the serum. Membrane-bound IgM molecules are non-covalently associated with heterodimer of CD79A and CD79B.

The protein resides in the secreted. It localises to the cell membrane. Functionally, immunoglobulins, also known as antibodies, are membrane-bound or secreted glycoproteins produced by B lymphocytes. In the recognition phase of humoral immunity, the membrane-bound immunoglobulins serve as receptors which, upon binding of a specific antigen, trigger the clonal expansion and differentiation of B lymphocytes into immunoglobulins-secreting plasma cells. Secreted immunoglobulins mediate the effector phase of humoral immunity, which results in the elimination of bound antigens. The antigen binding site is formed by the variable domain of one heavy chain, together with that of its associated light chain. Thus, each immunoglobulin has two antigen binding sites with remarkable affinity for a particular antigen. The variable domains are assembled by a process called V-(D)-J rearrangement and can then be subjected to somatic hypermutations which, after exposure to antigen and selection, allow affinity maturation for a particular antigen. IgM antibodies play an important role in primary defense mechanisms. They have been shown to be involved in early recognition of external invaders like bacteria and viruses, cellular waste and modified self, as well as in recognition and elimination of precancerous and cancerous lesions. The membrane-bound form is found in the majority of normal B cells alongside with IgD. Membrane-bound IgM induces the phosphorylation of CD79A and CD79B by the Src family of protein tyrosine kinases. It may cause death of cells by apoptosis. It is also found in soluble form, which represents about 30% of the total serum immunoglobulins where it is found almost exclusively as a homopentamer. After the antigen binds to the B cell receptor, the secreted form is secreted in large amounts (, PubMed:16895553). The polypeptide is Immunoglobulin mu heavy chain (Homo sapiens (Human)).